The primary structure comprises 316 residues: uncharacterized protein (316 aa).

Residues 285–316 (APEGDLGDIIEVDPSEPRSDPYRRLRTPPPGG) are disordered. Residues 289 to 298 (DLGDIIEVDP) show a composition bias toward acidic residues.

Its function is as follows. Possibly necessary for replication. This is an uncharacterized protein from Halobacterium salinarum (Halobacterium halobium).